The chain runs to 280 residues: MFRKVLFGRIAGKRRQDMATAGQYAENRAEDSAADHRSGDPAKIFLAEPEVHHPLDADFAIALVLEIAEDLGDAEHANRDGDEIDAFGKFHLSEGEPFLAGIDVLPDRAEKQAHDDHPERLQNRSVRQRNGDKKTEHDQCEIFRCSELQRHRGERRSGNCQQQGRHATGEERAECGRRQRLSGSALAGHLVAIDRRHGRRTLSWQVDQNGRGRAAILGTIIDARQHDQRGDRRKGEGDRQKHGDRRGRPDARKNADQRPQQDADEAPDDVDRSKSCLEAE.

Composition is skewed to basic and acidic residues over residues 110 to 122 (EKQA…ERLQ), 167 to 177 (ATGEERAECGR), 223 to 261 (ARQH…RPQQ), and 269 to 280 (DVDRSKSCLEAE). Disordered stretches follow at residues 110 to 137 (EKQA…KTEH), 151 to 177 (HRGE…ECGR), and 219 to 280 (TIID…LEAE).

This is an uncharacterized protein from Agrobacterium vitis (Rhizobium vitis).